The following is a 461-amino-acid chain: Cysteine--tRNA ligase (461 aa).

Zn(2+) is bound at residue cysteine 28. A 'HIGH' region motif is present at residues 30–40; it reads VTIYDLCHIGH. The Zn(2+) site is built by cysteine 209, histidine 234, and glutamate 238. The 'KMSKS' region signature appears at 266-270; that stretch reads KMSKS. Lysine 269 contributes to the ATP binding site.

The protein belongs to the class-I aminoacyl-tRNA synthetase family. As to quaternary structure, monomer. Zn(2+) is required as a cofactor.

The protein resides in the cytoplasm. The catalysed reaction is tRNA(Cys) + L-cysteine + ATP = L-cysteinyl-tRNA(Cys) + AMP + diphosphate. The polypeptide is Cysteine--tRNA ligase (Hamiltonella defensa subsp. Acyrthosiphon pisum (strain 5AT)).